A 393-amino-acid polypeptide reads, in one-letter code: Major outer membrane porin, serovar D (393 aa).

An N-terminal signal peptide occupies residues 1 to 22 (MKKLLKSVLVFAALSSASSLQA).

This sequence belongs to the chlamydial porin (CP) (TC 1.B.2) family. In terms of assembly, part of a disulfide cross-linked outer membrane complex (COMC) composed of the major outer membrane porin (MOMP), the small cysteine-rich protein (OmcA) and the large cysteine-rich periplasmic protein (OmcB).

The protein resides in the cell outer membrane. In elementary bodies (EBs, the infectious stage, which is able to survive outside the host cell) provides the structural integrity of the outer envelope through disulfide cross-links with the small cysteine-rich protein and the large cysteine-rich periplasmic protein. It has been described in publications as the Sarkosyl-insoluble COMC (Chlamydia outer membrane complex), and serves as the functional equivalent of peptidoglycan. Functionally, permits diffusion of specific solutes through the outer membrane. The polypeptide is Major outer membrane porin, serovar D (ompA) (Chlamydia trachomatis serovar D (strain ATCC VR-885 / DSM 19411 / UW-3/Cx)).